Reading from the N-terminus, the 518-residue chain is MIPDVSQALAWLEKHPQALKGIQRGLERETLRVNADGTLATTGHPEALGSALTHKWITTDFAEALLEFITPVDGDIEHMLTFMRDLHRYTARNMGDERMWPLSMPCYIAEGQDIELAQYGTSNTGRFKTLYREGLKNRYGALMQTISGVHYNFSLPMAFWQAKCGDISGADAKEKISAGYFRVIRNYYRFGWVIPYLFGASPAICSSFLQGKPTSLPFEKTECGMYYLPYATSLRLSDLGYTNKSQSNLGITFNDLYEYVAGLKQAIKTPSEEYAKIGIEKDGKRLQINSNVLQIENELYAPIRPKRVTRSGESPSDALLRGGIEYIEVRSLDINPFSPIGVDEQQVRFLDLFMVWCALADAPEMSSSELACTRVNWNRVILEGRKPGLTLGIGCETAQFPLLQVGKDLFRDLKRVAQTLDSINGGEAYQKVCDELVACFDNPDLTFSARILRSMIDTGIGGTGKAFAEAYRNLLREEPLEILREEDFVAEREASERRQQEMETADTEPFAVWLEKHA.

This sequence belongs to the glutamate--cysteine ligase type 1 family. Type 1 subfamily.

The catalysed reaction is L-cysteine + L-glutamate + ATP = gamma-L-glutamyl-L-cysteine + ADP + phosphate + H(+). It functions in the pathway sulfur metabolism; glutathione biosynthesis; glutathione from L-cysteine and L-glutamate: step 1/2. In Shigella flexneri serotype 5b (strain 8401), this protein is Glutamate--cysteine ligase.